Reading from the N-terminus, the 169-residue chain is Positive control factor (169 aa).

A DNA-binding region (H-T-H motif) is located at residues 132–157 (YERIADLLGVKKSTVQTTIKRASLKM).

Positive regulatory protein that acts at the late promoter PL. This Bacillus subtilis (strain 168) protein is Positive control factor (xpf).